We begin with the raw amino-acid sequence, 84 residues long: CDC42 small effector protein 2-A (84 aa).

Residues cysteine 10 and cysteine 11 are each lipidated (S-palmitoyl cysteine). One can recognise a CRIB domain in the interval 29-42 (IGEPTNFVHTAHVG).

Belongs to the CDC42SE/SPEC family.

Its subcellular location is the cytoplasm. The protein localises to the cytoskeleton. It localises to the cell membrane. Functionally, probably involved in the organization of the actin cytoskeleton by acting downstream of CDC42, inducing actin filament assembly. The protein is CDC42 small effector protein 2-A (cdc42se2-A) of Xenopus tropicalis (Western clawed frog).